The primary structure comprises 392 residues: Nucleosome assembly protein 1-like 1-A (392 aa).

The disordered stretch occupies residues 1–37 (MANIDNKGQTELDQQDMEDVEDVEEEETGEDANSKAR). The span at 13–30 (DQQDMEDVEDVEEEETGE) shows a compositional bias: acidic residues. An NAP1L motif motif is present at residues 126-150 (YEPTEEECEWKVEEEDISGDLKEKA). The Nuclear localization signal signature appears at 273–279 (IKKKQKH). A compositionally biased stretch (acidic residues) spans 346–377 (AIEDDDDDYDEEGEEADDEEGEEEADEDNDPD). The disordered stretch occupies residues 346–392 (AIEDDDDDYDEEGEEADDEEGEEEADEDNDPDYEPKKGQNPAECKQQ).

Belongs to the nucleosome assembly protein (NAP) family. In terms of assembly, forms homomultimers. Interacts with histone B4. Interacts with the B-type cyclins ccnb1 and ccnb2. Phosphorylated by cyclin B-cdc2 kinase complexes. In terms of tissue distribution, initially expressed throughout the embryo with expression higher at the animal pole. Becomes localized to presumptive ectoderm by gastrula stages. By stage 18 (neurula), expressed in the neural plate and posterior to the cement gland. In late neurula/early tailbud stages, expressed in the neural crest, neural tube, eyes, tailbud and ventral blood islands. Adult expression is predominantly in ovaries.

It is found in the cytoplasm. The protein localises to the nucleus. Functionally, acts as a chaperone for the linker histone to facilitate deposition of histone B4 onto linker DNA. Required for both remodeling of sperm chromatin into nucleosomes, and linker histone binding to nucleosome core dimers. Plays a role in tissue-specific gene regulation. Required for primitive hemopoiesis, acting upstream of tal1/scl. This is Nucleosome assembly protein 1-like 1-A (nap1l1-a) from Xenopus laevis (African clawed frog).